Reading from the N-terminus, the 81-residue chain is Short neurotoxin 2 (81 aa).

Residues 1–21 (MKTLLLTLVVVTIVCLDLGYT) form the signal peptide. 4 disulfide bridges follow: C24–C43, C38–C60, C62–C73, and C74–C79.

It belongs to the three-finger toxin family. Short-chain subfamily. Type I alpha-neurotoxin sub-subfamily. As to expression, expressed by the venom gland.

It localises to the secreted. Its function is as follows. Binds to muscle nicotinic acetylcholine receptor (nAChR) and inhibit acetylcholine from binding to the receptor, thereby impairing neuromuscular transmission. This is Short neurotoxin 2 from Cryptophis nigrescens (Eastern small-eyed snake).